The primary structure comprises 272 residues: Acidic leucine-rich nuclear phosphoprotein 32-related protein 2 (272 aa).

LRR repeat units follow at residues 57–78, 79–100, and 106–127; these read SLEE…PRLP, ALRR…AAVA, and TLRH…APLA. The LRRCT domain occupies 139 to 184; the sequence is CPVTKAKGYRDKVFALIPSLKFLDGMDAEGNDCLDSDDEEDEEEDE. A disordered region spans residues 163–272; that stretch reads GMDAEGNDCL…DSEDDANGDN (110 aa). Residues 164 to 241 show a composition bias toward acidic residues; that stretch reads MDAEGNDCLD…DEAGADEEDE (78 aa). Residues 248 to 257 are compositionally biased toward polar residues; sequence SKGSSGSAQP.

This sequence belongs to the ANP32 family.

The polypeptide is Acidic leucine-rich nuclear phosphoprotein 32-related protein 2 (Oryza sativa subsp. japonica (Rice)).